A 341-amino-acid polypeptide reads, in one-letter code: HTH-type transcriptional repressor PurR (341 aa).

An HTH lacI-type domain is found at 2 to 56 (ATIKDVAKRAGVSTTTVSHVINKTRFVAEETKAAVGAAIKELHYSPSAVARSLKV). The H-T-H motif DNA-binding region spans 4–23 (IKDVAKRAGVSTTTVSHVIN). A DNA-binding region spans residues 48–56 (SAVARSLKV). Hypoxanthine is bound by residues tyrosine 73, arginine 190, threonine 192, phenylalanine 221, and aspartate 275.

In terms of assembly, homodimer.

It functions in the pathway purine metabolism; purine nucleotide biosynthesis [regulation]. Is the main repressor of the genes involved in the de novo synthesis of purine nucleotides, regulating purB, purC, purEK, purF, purHD, purL, purMN and guaBA expression. PurR is allosterically activated to bind its cognate DNA by binding the purine corepressors, hypoxanthine or guanine, thereby effecting transcription repression. In Serratia proteamaculans (strain 568), this protein is HTH-type transcriptional repressor PurR.